The sequence spans 1872 residues: Ral GTPase-activating protein subunit alpha-2 (1872 aa).

S373, S376, and S379 each carry phosphoserine. Over residues 446-469 (DKKDVAEEDADKLGLSETDSKEVS) the composition is skewed to basic and acidic residues. The interval 446–481 (DKKDVAEEDADKLGLSETDSKEVSSESSGHKRSSSW) is disordered. S486 and S696 each carry phosphoserine. Disordered stretches follow at residues 711 to 730 (FRSATTSGAPGVEKARNTVR) and 758 to 849 (QPVP…TGSD). Residue T715 is modified to Phosphothreonine; by PKB. Residues 775–795 (SDSSQGQKVENSQNLSSSEPK) show a composition bias toward polar residues. Residues 796 to 810 (SVQESKGHVTHEHEG) are compositionally biased toward basic and acidic residues. A phosphoserine mark is found at S819 and S820. A compositionally biased stretch (basic and acidic residues) spans 824 to 843 (LDLKEESQQTHGRCRERQKS). S1592 carries the post-translational modification Phosphoserine. Residues 1634-1842 (LKNLDSRQCR…EERALYLEAI (209 aa)) form the Rap-GAP domain.

In terms of assembly, component of the heterodimeric RalGAP2 complex with RALGAPB. Heterodimerization is required for activity. In terms of tissue distribution, highly expressed in lung, liver, testis and thymus with lower levels in brain and heart (at protein level).

The protein localises to the cytoplasm. In terms of biological role, catalytic subunit of the heterodimeric RalGAP2 complex which acts as a GTPase activator for the Ras-like small GTPases RALA and RALB. The chain is Ral GTPase-activating protein subunit alpha-2 from Rattus norvegicus (Rat).